A 216-amino-acid chain; its full sequence is Cytochrome c biogenesis ATP-binding export protein CcmA (216 aa).

In terms of domain architecture, ABC transporter spans 18-216 (LQVEGLAGRR…AHARTLEISA (199 aa)). 50–57 (GHNGSGKT) is a binding site for ATP.

Belongs to the ABC transporter superfamily. CcmA exporter (TC 3.A.1.107) family. In terms of assembly, the complex is composed of two ATP-binding proteins (CcmA) and two transmembrane proteins (CcmB).

The protein resides in the cell inner membrane. The catalysed reaction is heme b(in) + ATP + H2O = heme b(out) + ADP + phosphate + H(+). Functionally, part of the ABC transporter complex CcmAB involved in the biogenesis of c-type cytochromes; once thought to export heme, this seems not to be the case, but its exact role is uncertain. Responsible for energy coupling to the transport system. The chain is Cytochrome c biogenesis ATP-binding export protein CcmA from Nitrosococcus oceani (strain ATCC 19707 / BCRC 17464 / JCM 30415 / NCIMB 11848 / C-107).